Here is a 170-residue protein sequence, read N- to C-terminus: MASVRIREAKEGDCGDILRLIRELAEFEKLSDQVKISEEALRADGFGDNPFYHCLVAEILPAPGKLLGPCVVGYGIYYFIYSTWKGRTIYLEDIYVMPEYRGQGIGSKIIKKVAEVALDKGCSQFRLAVLDWNQRAMDLYKALGAQDLTEAEGWHFFCFQGEATRKLAGK.

Residues 4-168 form the N-acetyltransferase domain; that stretch reads VRIREAKEGD…FQGEATRKLA (165 aa). Position 27-28 (27-28) interacts with substrate; sequence FE. Position 29 is an N6-acetyllysine (lysine 29). Glutamate 92 contacts substrate. Acetyl-CoA is bound by residues 94–96, 102–107, 133–135, and tyrosine 140; these read IYV, GQGIGS, and NQR. Tyrosine 140 (proton donor) is an active-site residue. Glutamate 152 provides a ligand contact to substrate.

This sequence belongs to the acetyltransferase family. As to quaternary structure, homodimer. As to expression, widely expressed. Under physiological conditions, SSAT2 is expressed at lower level that SSAT1 (SSAT). Many tissues express only SSAT1, several tissues express both SSAT1 and SSAT2, and bone, cervix, ovary and pineal gland expressed only SSAT2.

The protein localises to the cytoplasm. It catalyses the reaction S-(2-aminoethyl)-L-cysteine + acetyl-CoA = S-(2-acetamidoethyl)-L-cysteine + CoA + H(+). The enzyme catalyses an alkane-alpha,omega-diamine + acetyl-CoA = an N-acetylalkane-alpha,omega-diamine + CoA + H(+). Its function is as follows. Catalyzes the N-acetylation of the amino acid thialysine (S-(2-aminoethyl)-L-cysteine), a L-lysine analog with the 4-methylene group substituted with a sulfur. May also catalyze acetylation of polyamines, such as norspermidine, spermidine or spermine. However, ability to acetylate polyamines is weak, suggesting that it does not act as a diamine acetyltransferase in vivo. This Homo sapiens (Human) protein is Thialysine N-epsilon-acetyltransferase.